A 323-amino-acid polypeptide reads, in one-letter code: Zinc finger C2HC domain-containing protein 1A (323 aa).

The segment at 7–36 adopts a C2HC/C3H-type 1 zinc-finger fold; it reads ELRPCKICGRTFFPATLKKHVPICQKTSVK. Residues Cys11, Cys14, His26, and Cys30 each contribute to the Zn(2+) site. A disordered region spans residues 35-75; it reads VKKRKTFESSRQRAEGTDINTVKPVKPRPEPPKKQSNWKRK. Basic and acidic residues predominate over residues 40 to 50; that stretch reads TFESSRQRAEG. A C2HC/C3H-type 2 zinc finger spans residues 110–139; sequence DYVQCPYCQRRFNQNAADRHINFCKEQSAR. Zn(2+) is bound by residues Cys114, Cys117, His129, and Cys133. The tract at residues 138–273 is disordered; sequence ARMGQKIKGG…EAAMGYDSSD (136 aa). Polar residues predominate over residues 208 to 226; the sequence is KYQTQSPAHKNSTMVTSPQ.

This sequence belongs to the ZC2HC1 family. The cofactor is Zn(2+).

The chain is Zinc finger C2HC domain-containing protein 1A (zc2hc1a) from Xenopus laevis (African clawed frog).